We begin with the raw amino-acid sequence, 231 residues long: Flagellar L-ring protein (231 aa).

The signal sequence occupies residues 1–18 (MNRLLSVFALGGAVLLAG). C19 carries the N-palmitoyl cysteine lipid modification. A lipid anchor (S-diacylglycerol cysteine) is attached at C19.

Belongs to the FlgH family. In terms of assembly, the basal body constitutes a major portion of the flagellar organelle and consists of four rings (L,P,S, and M) mounted on a central rod.

Its subcellular location is the cell outer membrane. The protein resides in the bacterial flagellum basal body. Functionally, assembles around the rod to form the L-ring and probably protects the motor/basal body from shearing forces during rotation. This chain is Flagellar L-ring protein, found in Pseudomonas putida (strain GB-1).